The primary structure comprises 179 residues: MTRLEQIYAEKVAPELKKEFGYTSSMQIPRLSFVSLNMGLGEASNNNKLIEEAVVELTAIAGQKAVITRARKSIAAFKLREGMPVGCRVTLRRDRMWDYLDKLMNFALPRVRDFRGVPDRGFDGRGNFTLGIREHSIFPEINVDRVEHVKGMNVTIVTTATADKEGKMLLDLLGMPFKK.

Belongs to the universal ribosomal protein uL5 family. Part of the 50S ribosomal subunit; part of the 5S rRNA/L5/L18/L25 subcomplex. Contacts the 5S rRNA and the P site tRNA. Forms a bridge to the 30S subunit in the 70S ribosome.

This is one of the proteins that bind and probably mediate the attachment of the 5S RNA into the large ribosomal subunit, where it forms part of the central protuberance. In the 70S ribosome it contacts protein S13 of the 30S subunit (bridge B1b), connecting the 2 subunits; this bridge is implicated in subunit movement. Contacts the P site tRNA; the 5S rRNA and some of its associated proteins might help stabilize positioning of ribosome-bound tRNAs. This Solidesulfovibrio magneticus (strain ATCC 700980 / DSM 13731 / RS-1) (Desulfovibrio magneticus) protein is Large ribosomal subunit protein uL5.